The following is a 334-amino-acid chain: Cytoskeleton protein RodZ (334 aa).

The Cytoplasmic portion of the chain corresponds to 1–111; it reads MNTEATHDQN…LGKRRKKRDG (111 aa). Positions 19–71 constitute an HTH cro/C1-type domain; it reads LRNAREQLGLSQQAVAERLCLKVSTVRDIEEDKAPSDLASTFLRGYIRSYARL. A DNA-binding region (H-T-H motif) is located at residues 30–49; it reads QQAVAERLCLKVSTVRDIEE. The helical; Signal-anchor for type II membrane protein transmembrane segment at 112 to 132 threads the bilayer; the sequence is WLMSFTWLVLFVVVGLTGAWW. Residues 133-334 lie on the Periplasmic side of the membrane; it reads WQNHKAHQEE…TLNAEPTPAQ (202 aa). The interval 152–210 is disordered; it reads AGLNADKDSGQSVPLDTGAVTSQDTTPAQTAPAPATPVDSTAATQTPAPTAAATQNTVV. Over residues 161-175 the composition is skewed to polar residues; sequence GQSVPLDTGAVTSQD. Residues 176-210 show a composition bias toward low complexity; it reads TTPAQTAPAPATPVDSTAATQTPAPTAAATQNTVV.

It belongs to the RodZ family.

The protein resides in the cell inner membrane. In terms of biological role, cytoskeletal protein that is involved in cell-shape control through regulation of the length of the long axis. This Salmonella gallinarum (strain 287/91 / NCTC 13346) protein is Cytoskeleton protein RodZ.